Consider the following 324-residue polypeptide: tRNA dimethylallyltransferase (324 aa).

G17 to T24 is a binding site for ATP. T19–T24 contacts substrate. 4 interaction with substrate tRNA regions span residues D42–L45, Q166–R170, R251–R256, and K284–R291.

Belongs to the IPP transferase family. In terms of assembly, monomer. Mg(2+) is required as a cofactor.

The catalysed reaction is adenosine(37) in tRNA + dimethylallyl diphosphate = N(6)-dimethylallyladenosine(37) in tRNA + diphosphate. In terms of biological role, catalyzes the transfer of a dimethylallyl group onto the adenine at position 37 in tRNAs that read codons beginning with uridine, leading to the formation of N6-(dimethylallyl)adenosine (i(6)A). In Burkholderia orbicola (strain AU 1054), this protein is tRNA dimethylallyltransferase.